Reading from the N-terminus, the 208-residue chain is Small ribosomal subunit protein eS8 (208 aa).

The segment at 1-34 (MGISRDHWHKRRATGGKRAPIRKKRKYELGRPAA) is disordered. A compositionally biased stretch (basic residues) spans 7–26 (HWHKRRATGGKRAPIRKKRK).

The protein belongs to the eukaryotic ribosomal protein eS8 family. As to quaternary structure, component of the small ribosomal subunit. Identified in a IGF2BP1-dependent mRNP granule complex containing untranslated mRNAs. Part of the small subunit (SSU) processome, composed of more than 70 proteins and the RNA chaperone small nucleolar RNA (snoRNA) U3.

It is found in the cytoplasm. The protein localises to the membrane. It localises to the nucleus. Its subcellular location is the nucleolus. Functionally, component of the small ribosomal subunit. The ribosome is a large ribonucleoprotein complex responsible for the synthesis of proteins in the cell. Part of the small subunit (SSU) processome, first precursor of the small eukaryotic ribosomal subunit. During the assembly of the SSU processome in the nucleolus, many ribosome biogenesis factors, an RNA chaperone and ribosomal proteins associate with the nascent pre-rRNA and work in concert to generate RNA folding, modifications, rearrangements and cleavage as well as targeted degradation of pre-ribosomal RNA by the RNA exosome. This Spodoptera frugiperda (Fall armyworm) protein is Small ribosomal subunit protein eS8 (RpS8).